The following is a 430-amino-acid chain: V-type ATP synthase beta chain 1 (430 aa).

This sequence belongs to the ATPase alpha/beta chains family.

Functionally, produces ATP from ADP in the presence of a proton gradient across the membrane. The V-type beta chain is a regulatory subunit. The protein is V-type ATP synthase beta chain 1 (atpB1) of Treponema pallidum (strain Nichols).